The chain runs to 308 residues: Oxygen-dependent coproporphyrinogen-III oxidase (308 aa).

Residue serine 94 coordinates substrate. Residues histidine 98 and histidine 108 each coordinate a divalent metal cation. Histidine 108 acts as the Proton donor in catalysis. 110 to 112 contributes to the substrate binding site; it reads NVR. Positions 147 and 177 each coordinate a divalent metal cation. Residues 242–277 form an important for dimerization region; sequence YVEFNLVWDRGTLFGLQTGGRTESILMSMPPLVRWE. 260-262 is a substrate binding site; that stretch reads GGR.

Belongs to the aerobic coproporphyrinogen-III oxidase family. As to quaternary structure, homodimer. A divalent metal cation serves as cofactor.

The protein resides in the cytoplasm. It catalyses the reaction coproporphyrinogen III + O2 + 2 H(+) = protoporphyrinogen IX + 2 CO2 + 2 H2O. It functions in the pathway porphyrin-containing compound metabolism; protoporphyrin-IX biosynthesis; protoporphyrinogen-IX from coproporphyrinogen-III (O2 route): step 1/1. Involved in the heme biosynthesis. Catalyzes the aerobic oxidative decarboxylation of propionate groups of rings A and B of coproporphyrinogen-III to yield the vinyl groups in protoporphyrinogen-IX. The sequence is that of Oxygen-dependent coproporphyrinogen-III oxidase from Yersinia enterocolitica serotype O:8 / biotype 1B (strain NCTC 13174 / 8081).